The following is a 219-amino-acid chain: Probable glucosamine 6-phosphate N-acetyltransferase (219 aa).

Positions 42–198 (MKVRPLKDTD…EGPTLKRNAT (157 aa)) constitute an N-acetyltransferase domain. Substrate-binding positions include T64, 111 to 114 (KFIH), and 123 to 125 (EDV). 133-138 (GKQLGK) provides a ligand contact to acetyl-CoA. Residues 154 to 155 (YK) and R186 each bind substrate.

The protein belongs to the acetyltransferase family. GNA1 subfamily.

It carries out the reaction D-glucosamine 6-phosphate + acetyl-CoA = N-acetyl-D-glucosamine 6-phosphate + CoA + H(+). The protein operates within nucleotide-sugar biosynthesis; UDP-N-acetyl-alpha-D-glucosamine biosynthesis; N-acetyl-alpha-D-glucosamine 1-phosphate from alpha-D-glucosamine 6-phosphate (route I): step 1/2. This chain is Probable glucosamine 6-phosphate N-acetyltransferase, found in Drosophila melanogaster (Fruit fly).